The sequence spans 104 residues: L-rhamnose mutarotase (104 aa).

Tyrosine 18 is a substrate binding site. Histidine 22 acts as the Proton donor in catalysis. Substrate contacts are provided by residues tyrosine 41 and 76 to 77 (WW).

It belongs to the rhamnose mutarotase family. Homodimer.

The protein resides in the cytoplasm. It carries out the reaction alpha-L-rhamnose = beta-L-rhamnose. The protein operates within carbohydrate metabolism; L-rhamnose metabolism. Its function is as follows. Involved in the anomeric conversion of L-rhamnose. The polypeptide is L-rhamnose mutarotase (Escherichia coli O127:H6 (strain E2348/69 / EPEC)).